Reading from the N-terminus, the 234-residue chain is MSKSFTFKQFHIDIGSCGMPVSTDGVLLGAWADIRACSQILDIGAGTGLLSLMSAQRNSDAHIDAIELMPIAADVARLNFYQSPWKERLTLIHHDFLTYQAPHKYDAIICNPPYFNNGEQSQKGERSTARHTDSLPFDKLLQHCKTLISPTGRASFILPVFEGELFIKVAKNDDFHLTKITKVKTTEKKSPTRLLIELSLFPHIYQESTLTIHDGNGYSDDFIKLTRTFYLNMD.

The protein belongs to the methyltransferase superfamily. tRNA (adenine-N(6)-)-methyltransferase family.

The protein localises to the cytoplasm. It catalyses the reaction adenosine(37) in tRNA1(Val) + S-adenosyl-L-methionine = N(6)-methyladenosine(37) in tRNA1(Val) + S-adenosyl-L-homocysteine + H(+). Functionally, specifically methylates the adenine in position 37 of tRNA(1)(Val) (anticodon cmo5UAC). This Aliivibrio fischeri (strain ATCC 700601 / ES114) (Vibrio fischeri) protein is tRNA1(Val) (adenine(37)-N6)-methyltransferase.